The sequence spans 905 residues: Patched domain-containing protein 3 (905 aa).

The disordered stretch occupies residues 1 to 67 (MISSKVAPGE…PVGQEAPPPR (67 aa)). Residues 94–114 (WLFLLGPVLLTASLGTGLIFL) form a helical membrane-spanning segment. Residues Asn146, Asn199, Asn229, and Asn233 are each glycosylated (N-linked (GlcNAc...) asparagine). 6 helical membrane passes run 337 to 357 (TVIP…VVSC), 369 to 389 (VAVF…GLML), 391 to 411 (IGVP…GVGV), 441 to 461 (VAVS…TGIT), 475 to 495 (GTTL…IMAL), and 558 to 578 (FIVV…CFQV). An SSD domain is found at 338-495 (VIPLFHLAYI…ITCFGAIMAL (158 aa)). Residues Asn647, Asn661, and Asn692 are each glycosylated (N-linked (GlcNAc...) asparagine). Helical transmembrane passes span 759-779 (VMIA…HPVC), 781-801 (LWVT…MAFW), 813-833 (LVIC…AFVS), 849-869 (LLGY…CVLA), and 882-902 (IMFL…PVFL).

This sequence belongs to the patched family. In terms of tissue distribution, expressed in germ cells of the testis (at protein level).

It is found in the cell projection. It localises to the cilium. The protein localises to the flagellum membrane. Its subcellular location is the endoplasmic reticulum membrane. May play a role in sperm development or sperm function. However, does not appear to have an essential role in spermatogenesis or male fertility. The sequence is that of Patched domain-containing protein 3 from Rattus norvegicus (Rat).